The following is a 419-amino-acid chain: L-rhamnose isomerase (419 aa).

Residues His262, Asp294, and Asp296 each coordinate Mn(2+).

Belongs to the rhamnose isomerase family. In terms of assembly, homotetramer. Requires Mn(2+) as cofactor.

Its subcellular location is the cytoplasm. It catalyses the reaction L-rhamnopyranose = L-rhamnulose. It participates in carbohydrate degradation; L-rhamnose degradation; glycerone phosphate from L-rhamnose: step 1/3. Functionally, catalyzes the interconversion of L-rhamnose and L-rhamnulose. The protein is L-rhamnose isomerase of Shigella flexneri.